A 181-amino-acid chain; its full sequence is SecB-like chaperone MT2006 (181 aa).

This sequence belongs to the SecB-like family. As to quaternary structure, homotetramer, interacts with antitoxin HigA1.

Its function is as follows. Chaperone component of an atypical, type II toxin-antitoxin chaperone (TAC) module, probably required for antitoxin HigA1 to neutralize its cognate toxin HigB1. In Mycobacterium tuberculosis (strain CDC 1551 / Oshkosh), this protein is SecB-like chaperone MT2006 (secBL).